A 738-amino-acid polypeptide reads, in one-letter code: MSYPPPVGDSIKLKVQASNDPEEAFTNRAYLPISSFSFLFPNVQSNLYTTNTNYIKIRVGANEYILSASPNKNMKPDSIALSKALRGWMYVSNNEEVYVEFYDPNPNICGSMKVSIDYLTKGKQGPKQDSQEIIGKIIDNFNSQYFTFGQLFYIKNSNSTFELRVEAVETNEVPTKDKGWAIISPATKIILQKMPGSLIDIETNGPLVVNQIFTSDWDFENMGIGGLDAEFRDIFRRAFSSRIFPPAIVKKLGVNHVKGMLLYGPPGTGKTLIARQIGKMLNGREPKVVSGPSILNKYVGQSEENIRMLFRDAEIEQKAKGDDSGLHIIIFDELDAICKSRGSRQGDSGVGDSVVNQLLAMIDGVESLNNILVIGMTNRKDMIDEALLRPGRLEVHVEISLPDEHGREQIFKIHTAKMRDQNALDKDVNLANYAHTTRNYSGAEIEGVVKSAASYAFSRQVDTKNIKNVEIKPEDIKVCDQDFKRAITEVTPSFGSTDNQFESYAENGIINYGPVFDKLLQSGNAFVEQVKKSNRTPMMSVLLSGRPGCGKSSLAATLAKSSEFPFTRIISPNDLLGYNESAKASKITKVFEDSYKSPMSCVVVDEIERLIEYVPIGPRFSNLILQTLAVLFKRTPPKGRKLLVIATTSNPDILKDMDIMDCFATVLSVPSISTAKEFQTVCFELGFTQKEASEAASFFTSPITIKQIIMIVEMARQEEGNFIDNFKMCLEDFNIRNF.

Residues 507–512 (NGIINY) and 547–554 (PGCGKSSL) each bind ATP.

It belongs to the AAA ATPase family. In terms of assembly, interacts with syn7A, snpA and snpC. Mg(2+) serves as cofactor.

It is found in the cytoplasmic vesicle membrane. The protein localises to the endosome membrane. The enzyme catalyses ATP + H2O = ADP + phosphate + H(+). Required for vesicle-mediated transport. Involved in endocytosis and endosome-endosome fusion. May be required for transport from the endoplasmic reticulum to the Golgi stack, and for the fusion of transport vesicles within the Golgi cisternae. Required for cell polarity, locomotion and chemotaxis. The protein is Vesicle-fusing ATPase (nsfA) of Dictyostelium discoideum (Social amoeba).